A 439-amino-acid chain; its full sequence is Protein ABHD8 (439 aa).

2 disordered regions span residues 54 to 75 (HAGPAPIPTPPPPPPEDDPGVK) and 122 to 148 (ELAEPAGGDTRANPGSGRRRRPRRPKR). Residues 58-67 (APIPTPPPPP) show a composition bias toward pro residues. Residues 138–148 (GRRRRPRRPKR) are compositionally biased toward basic residues. Positions 169–271 (VLFFIHGVGG…HKVIMINGGG (103 aa)) constitute an AB hydrolase-1 domain. Catalysis depends on charge relay system residues Ser-244, Asp-362, and His-390. The segment at 415–439 (EAEPKLEPKPKPQLLQPEPAPGEEK) is disordered.

Belongs to the AB hydrolase superfamily. Interacts with NLRP3 (via NACHT and LLR domains); this interaction is enhanced in the presence of NLRP3 inflammasome inducers, such as ATP, nigericin, silica, or alum. Interacts with ZDHHC12.

It localises to the cytoplasm. Functionally, negatively regulates NLRP3-driven inflammation. Promotes NLRP3 degradation through the chaperone-mediated autophagy (CMA) pathway, hence attenuating inflammasome activation and IL1B secretion. Acts by recruiting palmitoyltransferase ZDHHC12 to NLRP3, facilitating NLRP3 palmitoylation and subsequent degradation. The sequence is that of Protein ABHD8 from Mus musculus (Mouse).